The following is a 331-amino-acid chain: ADP-L-glycero-D-manno-heptose-6-epimerase (331 aa).

NADP(+)-binding positions include 11–12 (FI), 32–33 (DN), lysine 39, lysine 54, 75–79 (EGACS), and asparagine 92. Residue tyrosine 139 is the Proton acceptor of the active site. Lysine 143 is a binding site for NADP(+). A substrate-binding site is contributed by asparagine 168. The NADP(+) site is built by valine 169 and lysine 177. Catalysis depends on lysine 177, which acts as the Proton acceptor. Substrate contacts are provided by residues arginine 179, histidine 186, 200 to 203 (FGEY), arginine 213, and tyrosine 292.

The protein belongs to the NAD(P)-dependent epimerase/dehydratase family. HldD subfamily. As to quaternary structure, homopentamer. The cofactor is NADP(+).

It catalyses the reaction ADP-D-glycero-beta-D-manno-heptose = ADP-L-glycero-beta-D-manno-heptose. The protein operates within nucleotide-sugar biosynthesis; ADP-L-glycero-beta-D-manno-heptose biosynthesis; ADP-L-glycero-beta-D-manno-heptose from D-glycero-beta-D-manno-heptose 7-phosphate: step 4/4. Its function is as follows. Catalyzes the interconversion between ADP-D-glycero-beta-D-manno-heptose and ADP-L-glycero-beta-D-manno-heptose via an epimerization at carbon 6 of the heptose. The sequence is that of ADP-L-glycero-D-manno-heptose-6-epimerase from Cupriavidus necator (strain ATCC 17699 / DSM 428 / KCTC 22496 / NCIMB 10442 / H16 / Stanier 337) (Ralstonia eutropha).